Consider the following 602-residue polypeptide: Elongation factor 4 (602 aa).

A tr-type G domain is found at 7 to 189 (SRLRNFCIIA…AVVERVPPPK (183 aa)). GTP-binding positions include 19 to 24 (DHGKST) and 136 to 139 (NKVD).

The protein belongs to the TRAFAC class translation factor GTPase superfamily. Classic translation factor GTPase family. LepA subfamily.

The protein localises to the cell inner membrane. The enzyme catalyses GTP + H2O = GDP + phosphate + H(+). Required for accurate and efficient protein synthesis under certain stress conditions. May act as a fidelity factor of the translation reaction, by catalyzing a one-codon backward translocation of tRNAs on improperly translocated ribosomes. Back-translocation proceeds from a post-translocation (POST) complex to a pre-translocation (PRE) complex, thus giving elongation factor G a second chance to translocate the tRNAs correctly. Binds to ribosomes in a GTP-dependent manner. This Prochlorococcus marinus (strain MIT 9211) protein is Elongation factor 4.